We begin with the raw amino-acid sequence, 98 residues long: Integration host factor subunit beta (98 aa).

It belongs to the bacterial histone-like protein family. As to quaternary structure, heterodimer of an alpha and a beta chain.

This protein is one of the two subunits of integration host factor, a specific DNA-binding protein that functions in genetic recombination as well as in transcriptional and translational control. The chain is Integration host factor subunit beta from Pseudomonas fluorescens (strain Pf0-1).